A 76-amino-acid polypeptide reads, in one-letter code: U-actitoxin-Avd8c (76 aa).

The first 16 residues, 1-16 (LVIVFVVLLGVPLISA), serve as a signal peptide directing secretion. Residues 17–33 (NEEELLAILQDQRNDAR) constitute a propeptide that is removed on maturation.

It belongs to the sea anemone 8 toxin family.

The protein localises to the secreted. Its subcellular location is the nematocyst. This chain is U-actitoxin-Avd8c, found in Anemonia viridis (Snakelocks anemone).